Here is a 1273-residue protein sequence, read N- to C-terminus: Inverted formin-2 (1273 aa).

5 disordered regions span residues 1-30 (MSVK…EANL), 346-387 (GRPR…GQQP), 427-559 (LSSS…PLPG), 960-999 (NKDR…GPGK), and 1021-1273 (KTAR…CVIQ). Ser-2 bears the N-acetylserine mark. A GBD/FH3 domain is found at 2 to 330 (SVKEGAQRKW…RAVLLASDAQ (329 aa)). A Phosphoserine modification is found at Ser-351. Residues 359-382 (SVQTNSVQNQGSSSQNTTTPTTKV) are compositionally biased toward low complexity. The region spanning 421-564 (PLPTPPLSSS…PPLPGFSVPS (144 aa)) is the FH1 domain. Pro residues-rich tracts occupy residues 433 to 516 (VLPP…PLPS) and 524 to 558 (QPPP…PPLP). The 391-residue stretch at 589–979 (HRRVNPPTLR…AERRKQQLAE (391 aa)) folds into the FH2 domain. Residues 907-984 (EASQELDKVF…QQLAEEEARR (78 aa)) are a coiled coil. The WH2 domain maps to 1007–1022 (DALLADIRKGFQLRKT). The span at 1047–1059 (ATASNPTQGTNHP) shows a compositional bias: polar residues. Residues 1088 to 1101 (SKEEDGPPALERRS) show a composition bias toward basic and acidic residues. Phosphoserine is present on residues Ser-1172 and Ser-1174. Acidic residues predominate over residues 1195-1204 (GEDEDGEDTA). A Phosphothreonine modification is found at Thr-1203. A phosphoserine mark is found at Ser-1216 and Ser-1218. A phosphothreonine mark is found at Thr-1223 and Thr-1230. Positions 1242 to 1251 (TSKRRKKRPS) are enriched in basic residues.

Belongs to the formin homology family. Interacts with profilin and actin at the FH1 and FH2 domains respectively. Interacts with DAAM2.

Its subcellular location is the cytoplasm. The protein resides in the perinuclear region. Its activity is regulated as follows. Phosphate inhibits both the depolymerization and severing activities. Severs actin filaments and accelerates their polymerization and depolymerization. The sequence is that of Inverted formin-2 (Inf2) from Mus musculus (Mouse).